Reading from the N-terminus, the 1820-residue chain is Kinesin-like protein KIF20B (1820 aa).

Residues 58–479 (YLQVCLRIRP…LKFSAIAQKV (422 aa)) enclose the Kinesin motor domain. Position 152 to 159 (152 to 159 (GLTNSGKT)) interacts with ATP. Ser-488 is subject to Phosphoserine. Coiled coils occupy residues 523 to 603 (ENSL…KIRE) and 674 to 793 (GFED…MENT). Thr-560 carries the phosphothreonine modification. Residues 829 to 866 (SERKRVNENELQQDEPPAKKGSIHVSSAITEDQKKSEE) are disordered. Ser-997 is modified (phosphoserine). The segment at 1050-1107 (ENSFHSSIEAIWEECKEIVKASSKKSHQIEELEQQIEKLQAEVKGYKDENNRLKEKEH) is necessary and sufficient for interaction with SHTN1. Residues 1247–1264 (EEEEETNRQETEKLKEEL) are compositionally biased toward basic and acidic residues. Positions 1247-1275 (EEEEETNRQETEKLKEELSASSARTQNLK) are disordered. Over residues 1265–1274 (SASSARTQNL) the composition is skewed to polar residues. An interaction with PIN1 region spans residues 1560–1820 (IETQIMDIKP…KRRLRTKTAK (261 aa)). Phosphoserine is present on Ser-1588. Thr-1644 is modified (phosphothreonine; by CDK1). Phosphoserine is present on residues Ser-1658, Ser-1715, and Ser-1740. Residues 1760 to 1772 (LSNVEASKENVSQ) are compositionally biased toward polar residues. Residues 1760-1781 (LSNVEASKENVSQPKRAKRKLY) form a disordered region.

The protein belongs to the TRAFAC class myosin-kinesin ATPase superfamily. Kinesin family. In terms of assembly, oligomerizes (via kinesin motor domain). Associates with microtubules. Interacts (via C-terminal globular tail region) with PIN1 (via WW domain). Interacts with PRC1. Interacts with SHTN1 (via N-terminus); the interaction is direct and promotes the association of SHTN1 to microtubules in primary neurons. In terms of processing, phosphorylated during mitosis by CDK1. In terms of tissue distribution, brain, ovary, kidney and testis (at protein level). Overexpressed in bladder cancer cells (at protein level). Expressed in testis. Overexpressed in bladder cancer cells.

It is found in the nucleus. It localises to the cytoplasm. The protein resides in the cytoskeleton. Its subcellular location is the microtubule organizing center. The protein localises to the centrosome. It is found in the nucleolus. It localises to the nucleoplasm. The protein resides in the spindle. Its subcellular location is the spindle pole. The protein localises to the midbody. It is found in the cell projection. It localises to the axon. The protein resides in the growth cone. Plus-end-directed motor enzyme that is required for completion of cytokinesis. Required for proper midbody organization and abscission in polarized cortical stem cells. Plays a role in the regulation of neuronal polarization by mediating the transport of specific cargos. Participates in the mobilization of SHTN1 and in the accumulation of PIP3 in the growth cone of primary hippocampal neurons in a tubulin and actin-dependent manner. In the developing telencephalon, cooperates with SHTN1 to promote both the transition from the multipolar to the bipolar stage and the radial migration of cortical neurons from the ventricular zone toward the superficial layer of the neocortex. Involved in cerebral cortex growth. Acts as an oncogene for promoting bladder cancer cells proliferation, apoptosis inhibition and carcinogenic progression. The protein is Kinesin-like protein KIF20B of Homo sapiens (Human).